The following is a 286-amino-acid chain: Transcription factor egl-46 (286 aa).

The C2H2-type 1; atypical zinc-finger motif lies at 180 to 200 (CICRLCKVKYEDVFKLAQHKC). C2H2-type zinc fingers lie at residues 208–230 (YKCP…RRWH) and 248–271 (VSCS…STCQ).

The protein belongs to the INSM1 family. Interacts (via C-terminus) with egl-44 (via N-terminus); the interaction is direct; the interaction may regulate transcription. Expressed in touch cells, HSN cells, ventral cord motor neurons and ciliated ray neurons.

Its subcellular location is the nucleus. Transcription factor. Represses expression of genes involved in differentiation of touch receptor neurons (TRN), probably acting as a heterodimer with egl-44, perhaps by occupying similar cis-regulatory elements as an unc-86/mec-3 heterodimer. Plays a role in cell fate specification of neurons, including the hook neuron HOB, the gas-sensing neuron BAG and touch receptor neurons. Plays a role in neuron differentiation by repressing the expression of zag-1 in FLP neurons, probably acting as a heterodimer with egl-44; because zag-1 represses expression of egl-46 and egl-44, together these proteins form a bistable, negative-feedback loop that regulates the choice between neuronal fates. Acts downstream of egl-44 to prevent touch cell differentiation in FLP neurons. Involved in male mating behavior, acting in concert with egl-44, via modulation of expression of polycystins lov-1 and pkd-2, homeodomain protein ceh-26, and neuropeptide-like protein nlp-8. Modulates the expression of a subset of terminal differentiation genes involved in O(2)- and CO(2)-sensing, acting in parallel to ets-5 and egl-13. May act upstream of RFX transcription factor daf-19 to regulate gene expression specifically in the HOB neuron. Plays a role in specifying commissural dendrites of the PVD nociceptive neurons, acting in concert with egl-44. In association with egl-44, regulates cell cycle exit in the neuronal Q cell lineage. The sequence is that of Transcription factor egl-46 from Caenorhabditis elegans.